The primary structure comprises 259 residues: Chloroplastic import inner membrane translocase subunit HP30-2 (259 aa).

Helical transmembrane passes span 55–75, 108–124, 135–155, and 158–178; these read AVVTAMGGVQGAFIGGLMGTL, NFAAITGVNAGIACVMK, AVVAAFGSGVAYSLVSAGLQG, and MNAITTAAGFAVFQGVFFKLG.

Belongs to the Tim17/Tim22/Tim23 family. Probable component of a protein-conducting channel made of HP30-1, HP30-2 and HP20 that mediates the import of transit sequence-less proteins into the chloroplastic inner membrane. Interacts with CEQORH.

It localises to the mitochondrion membrane. The protein localises to the plastid. The protein resides in the chloroplast inner membrane. Its function is as follows. Together with HP30-1 and HP20, triggers the import and insertion of transit sequence-less multi-pass transmembrane proteins (e.g. CEQORH) into the chloroplastic inner membrane. This is Chloroplastic import inner membrane translocase subunit HP30-2 from Arabidopsis thaliana (Mouse-ear cress).